A 410-amino-acid polypeptide reads, in one-letter code: Mitochondrial potassium channel (410 aa).

The N-terminal 35 residues, 1 to 35 (MTGCSPVFTMQQVVGVSHRLVWRTFRGTDLLMTRT), are a transit peptide targeting the mitochondrion. Residues 36-201 (LCSPGPSRPG…KERTRAERTK (166 aa)) are Mitochondrial matrix-facing. A coiled-coil region spans residues 116-143 (VREAREDLEAQQTKLKEVRDRLDRVSRE). A helical membrane pass occupies residues 202–222 (NWSLIGSVLGALIGVAGSTYV). At 223–385 (NRVRLQELKA…RLEAQANRNA (163 aa)) the chain is on the mitochondrial intermembrane side. The interval 276–296 (GQDQGSGSPTGPSSPRGKDID) is disordered. Low complexity predominate over residues 280–290 (GSGSPTGPSSP). A helical transmembrane segment spans residues 386 to 406 (ISSTLVTCVTFMATLPLLYML). The Mitochondrial matrix segment spans residues 407–410 (FKTS).

In terms of assembly, the mitochondrial potassium channel (mitoK(ATP)) forms a heteromultimer.

The protein localises to the mitochondrion inner membrane. It carries out the reaction K(+)(in) = K(+)(out). Its activity is regulated as follows. Channel activity inhibited by ATP via ABCB8/MITOSUR subunit. Its function is as follows. Pore-forming subunit of the mitochondrial ATP-gated potassium channel (mitoK(ATP)). Together with ATP-binding subunit ABCB8/MITOSUR of the mitoK(ATP) channel, mediates ATP-dependent K(+) currents across the mitochondrial inner membrane. An increase in ATP intracellular levels closes the channel, inhibiting K(+) transport, whereas a decrease in ATP levels enhances K(+) uptake in the mitochondrial matrix. May contribute to the homeostatic control of cellular metabolism under stress conditions by regulating the mitochondrial matrix volume. In Rattus norvegicus (Rat), this protein is Mitochondrial potassium channel.